A 176-amino-acid polypeptide reads, in one-letter code: Peptidoglycan-associated lipoprotein (176 aa).

Residues 1 to 32 form the signal peptide; sequence MSRIDTPAASRMQTIARNPVMIALVMTLALAG. Cys33 carries N-palmitoyl cysteine lipidation. Cys33 carries S-diacylglycerol cysteine lipidation. The OmpA-like domain maps to 58–175; the sequence is QQDFTVNVGD…RAVTVLGGAG (118 aa).

It belongs to the Pal lipoprotein family. The Tol-Pal system is composed of five core proteins: the inner membrane proteins TolA, TolQ and TolR, the periplasmic protein TolB and the outer membrane protein Pal. They form a network linking the inner and outer membranes and the peptidoglycan layer.

Its subcellular location is the cell outer membrane. Functionally, part of the Tol-Pal system, which plays a role in outer membrane invagination during cell division and is important for maintaining outer membrane integrity. The polypeptide is Peptidoglycan-associated lipoprotein (Rhizobium meliloti (strain 1021) (Ensifer meliloti)).